Here is a 254-residue protein sequence, read N- to C-terminus: MKIKVYSLEGEAIDEMELPEIFNEEFRPDVIKRAVLSAQTARVQPWGPDPMAGKRTSAQSYGAGRGVAMVPRIKNGSRAAFVPQAVGGRRAHPPRPQKNYHERINRKERRLAIRSAVAATARKDLVEARGHRIENVPQLPLVVDDELSMIKRTADTREVFRKLGIMDDIVRAREGKKIRAGKGKMRGRKYRTPRGPLIVVGDDKGITRGARNHPGVDVVRVENLNAELLAPGTHPGRLTVFTRSAIEKLDELFQ.

The protein belongs to the universal ribosomal protein uL4 family. Part of the 50S ribosomal subunit.

One of the primary rRNA binding proteins, this protein initially binds near the 5'-end of the 23S rRNA. It is important during the early stages of 50S assembly. It makes multiple contacts with different domains of the 23S rRNA in the assembled 50S subunit and ribosome. Its function is as follows. Forms part of the polypeptide exit tunnel. This is Large ribosomal subunit protein uL4 from Methanothermobacter thermautotrophicus (strain ATCC 29096 / DSM 1053 / JCM 10044 / NBRC 100330 / Delta H) (Methanobacterium thermoautotrophicum).